The primary structure comprises 164 residues: MWKLVVVLTVNLLQGALTDVYVMKDVTLGFGQALEQCREESQLTEEKMEEFFHFWNDDFKFEHRELGCAIQCMSRHFNLLTDSSRMHHENTDKFIKSFPNGEILSQKMIDMIHTCEKTFDSEPDHCWRILRVAECFKDACNKSGLAPSMELILAEFIMESEADK.

An N-terminal signal peptide occupies residues 1–18; the sequence is MWKLVVVLTVNLLQGALT. Intrachain disulfides connect cysteine 37–cysteine 72, cysteine 68–cysteine 126, and cysteine 115–cysteine 135.

Belongs to the PBP/GOBP family. In terms of assembly, homodimer. As to expression, antenna.

Present in the aqueous fluid surrounding olfactory sensory dendrites and are thought to aid in the capture and transport of hydrophobic odorants into and through this fluid. This is General odorant-binding protein 1 from Bombyx mori (Silk moth).